The following is a 78-amino-acid chain: Large ribosomal subunit protein bL28 (78 aa).

It belongs to the bacterial ribosomal protein bL28 family.

This Prochlorococcus marinus (strain MIT 9515) protein is Large ribosomal subunit protein bL28.